Here is a 347-residue protein sequence, read N- to C-terminus: MTDTLASLAYLAGKPTAQAKIKAKPEHFQVREDLGFEFTGSGEHLMVRIRKTGENTSFVANELAKACGVKSKDVSWAGLKDRHAVTEQWLSVHLPKAETPDFSAFLAQYPSIEILATARHNKKLRPGDLVGNDFVVTLSEVSDVDDVLKRLETVAKLGVPNYFGNQRFGNNGNNLQEAKRWGRDNVRSRNQNQRSLYLSAARSWIFNLIVSARLEQSLFDKVLLGDILFKGDEQLLVSAENHADLQSQYDAGDLVISGALAGDNALPTQDDALALEQVFLDAEPDLMALIRGNRMRHDRRAIALKPANLSWQVDGNNIILTFSLDAGSFATSIIRELVQEIAFEREF.

Asp-81 serves as the catalytic Nucleophile. One can recognise a TRUD domain in the interval 158 to 304 (GVPNYFGNQR…MRHDRRAIAL (147 aa)).

It belongs to the pseudouridine synthase TruD family.

It catalyses the reaction uridine(13) in tRNA = pseudouridine(13) in tRNA. In terms of biological role, responsible for synthesis of pseudouridine from uracil-13 in transfer RNAs. This Vibrio vulnificus (strain YJ016) protein is tRNA pseudouridine synthase D.